The chain runs to 138 residues: Phosphoribosyl-AMP cyclohydrolase (138 aa).

Asp86 provides a ligand contact to Mg(2+). Position 87 (Cys87) interacts with Zn(2+). Positions 88 and 90 each coordinate Mg(2+). 2 residues coordinate Zn(2+): Cys104 and Cys111.

Belongs to the PRA-CH family. Homodimer. Mg(2+) is required as a cofactor. It depends on Zn(2+) as a cofactor.

It localises to the cytoplasm. It carries out the reaction 1-(5-phospho-beta-D-ribosyl)-5'-AMP + H2O = 1-(5-phospho-beta-D-ribosyl)-5-[(5-phospho-beta-D-ribosylamino)methylideneamino]imidazole-4-carboxamide. It participates in amino-acid biosynthesis; L-histidine biosynthesis; L-histidine from 5-phospho-alpha-D-ribose 1-diphosphate: step 3/9. Catalyzes the hydrolysis of the adenine ring of phosphoribosyl-AMP. The protein is Phosphoribosyl-AMP cyclohydrolase of Marinobacter nauticus (strain ATCC 700491 / DSM 11845 / VT8) (Marinobacter aquaeolei).